We begin with the raw amino-acid sequence, 186 residues long: Ribulose bisphosphate carboxylase small subunit, chloroplastic 6 (186 aa).

A chloroplast-targeting transit peptide spans 1–60 (MASSMLSNAAVATTAASRSAGAQASMVAPFTGLKSVSAFPVTRKSSNDLSTVPSNGGKVQ).

It belongs to the RuBisCO small chain family. Heterohexadecamer of 8 large and 8 small subunits.

Its subcellular location is the plastid. It localises to the chloroplast. In terms of biological role, ruBisCO catalyzes two reactions: the carboxylation of D-ribulose 1,5-bisphosphate, the primary event in carbon dioxide fixation, as well as the oxidative fragmentation of the pentose substrate. Both reactions occur simultaneously and in competition at the same active site. Although the small subunit is not catalytic it is essential for maximal activity. This Mesembryanthemum crystallinum (Common ice plant) protein is Ribulose bisphosphate carboxylase small subunit, chloroplastic 6.